Consider the following 1165-residue polypeptide: ATP-dependent helicase/deoxyribonuclease subunit B (1165 aa).

Residues 1–324 (MRFIIGGAGS…LVEAQNRREE (324 aa)) form the UvrD-like helicase ATP-binding domain. 6–13 (GGAGSGKS) is a binding site for ATP. In terms of domain architecture, UvrD-like helicase C-terminal spans 282 to 597 (PLRFRGAPEL…IVGTVERSRH (316 aa)). [4Fe-4S] cluster-binding residues include cysteine 803, cysteine 1121, cysteine 1124, and cysteine 1130.

It belongs to the helicase family. AddB/RexB type 1 subfamily. Heterodimer of AddA and AddB. The cofactor is Mg(2+). Requires [4Fe-4S] cluster as cofactor.

In terms of biological role, the heterodimer acts as both an ATP-dependent DNA helicase and an ATP-dependent, dual-direction single-stranded exonuclease. Recognizes the chi site generating a DNA molecule suitable for the initiation of homologous recombination. The AddB subunit has 5' -&gt; 3' nuclease activity but not helicase activity. The sequence is that of ATP-dependent helicase/deoxyribonuclease subunit B from Symbiobacterium thermophilum (strain DSM 24528 / JCM 14929 / IAM 14863 / T).